Here is a 349-residue protein sequence, read N- to C-terminus: S-adenosylmethionine:tRNA ribosyltransferase-isomerase (349 aa).

This sequence belongs to the QueA family. In terms of assembly, monomer.

The protein localises to the cytoplasm. It catalyses the reaction 7-aminomethyl-7-carbaguanosine(34) in tRNA + S-adenosyl-L-methionine = epoxyqueuosine(34) in tRNA + adenine + L-methionine + 2 H(+). Its pathway is tRNA modification; tRNA-queuosine biosynthesis. Its function is as follows. Transfers and isomerizes the ribose moiety from AdoMet to the 7-aminomethyl group of 7-deazaguanine (preQ1-tRNA) to give epoxyqueuosine (oQ-tRNA). The sequence is that of S-adenosylmethionine:tRNA ribosyltransferase-isomerase from Cupriavidus pinatubonensis (strain JMP 134 / LMG 1197) (Cupriavidus necator (strain JMP 134)).